A 785-amino-acid polypeptide reads, in one-letter code: uncharacterized protein (785 aa).

Residues 293-421 (LVGYFLSEGY…LRLISLRLGF (129 aa)) form the DOD-type homing endonuclease domain.

This protein undergoes a protein self splicing that involves a post-translational excision of the intervening region (intein) followed by peptide ligation.

This is an uncharacterized protein from Methanocaldococcus jannaschii (strain ATCC 43067 / DSM 2661 / JAL-1 / JCM 10045 / NBRC 100440) (Methanococcus jannaschii).